Consider the following 435-residue polypeptide: 5-methylthioadenosine/S-adenosylhomocysteine deaminase (435 aa).

Residues H65 and H67 each contribute to the Zn(2+) site. Residues E94, R150, and H189 each contribute to the substrate site. H216 contacts Zn(2+). Substrate is bound by residues E219 and D304. D304 is a binding site for Zn(2+).

It belongs to the metallo-dependent hydrolases superfamily. MTA/SAH deaminase family. It depends on Zn(2+) as a cofactor.

It carries out the reaction S-adenosyl-L-homocysteine + H2O + H(+) = S-inosyl-L-homocysteine + NH4(+). The catalysed reaction is S-methyl-5'-thioadenosine + H2O + H(+) = S-methyl-5'-thioinosine + NH4(+). In terms of biological role, catalyzes the deamination of 5-methylthioadenosine and S-adenosyl-L-homocysteine into 5-methylthioinosine and S-inosyl-L-homocysteine, respectively. Is also able to deaminate adenosine. In Bacillus thuringiensis (strain Al Hakam), this protein is 5-methylthioadenosine/S-adenosylhomocysteine deaminase.